The primary structure comprises 215 residues: ER lumen protein-retaining receptor 3 (215 aa).

Topologically, residues 1–4 (MNIF) are lumenal. The helical transmembrane segment at 5 to 24 (RLSGDVCHLIAIIILFLKIW) threads the bilayer. The Cytoplasmic portion of the chain corresponds to 25–32 (RSKSCAGI). A helical membrane pass occupies residues 33-52 (SGKSQVLFALVFTTRYLDLF). Positions 47–48 (RY) are interaction with the K-D-E-L motif on target proteins. Topologically, residues 53-58 (TSYISA) are lumenal. A helical transmembrane segment spans residues 59-79 (YNTVMKVVYLLLAYSTVGLIF). The Cytoplasmic portion of the chain corresponds to 80 to 92 (FRFRNSYDSESDS). The helical transmembrane segment at 93–110 (FRVEFLLVPVAGLSFLEN) threads the bilayer. Topologically, residues 111–116 (YAFTPL) are lumenal. A helical transmembrane segment spans residues 117–135 (EILWTFSIYLESVAILPQL). Residues 136–149 (FMITKTGEAESITA) lie on the Cytoplasmic side of the membrane. A helical transmembrane segment spans residues 150–168 (HYLLFLGLYRALYLANWLW). An interaction with the K-D-E-L motif on target proteins region spans residues 159–169 (RALYLANWLWR). At 169–178 (RFHTEGFYDQ) the chain is on the lumenal side. A helical membrane pass occupies residues 179 to 199 (IAVVSGVVQTIFYCDFFYLYF). The Cytoplasmic segment spans residues 200–215 (TRVLRGSGKMSLPMPV). Residues 204-208 (RGSGK) form an important for recycling of cargo proteins with the sequence motif K-D-E-L from the Golgi to the endoplasmic reticulum region.

It belongs to the ERD2 family.

The protein localises to the endoplasmic reticulum membrane. It is found in the golgi apparatus membrane. The protein resides in the cytoplasmic vesicle. Its subcellular location is the COPI-coated vesicle membrane. In terms of biological role, receptor for the C-terminal sequence motif K-D-E-L that is present on endoplasmic reticulum resident proteins and that mediates their recycling from the Golgi back to the endoplasmic reticulum. The chain is ER lumen protein-retaining receptor 3 (kdelr3) from Danio rerio (Zebrafish).